Reading from the N-terminus, the 94-residue chain is Putative pterin-4-alpha-carbinolamine dehydratase (94 aa).

This sequence belongs to the pterin-4-alpha-carbinolamine dehydratase family.

It catalyses the reaction (4aS,6R)-4a-hydroxy-L-erythro-5,6,7,8-tetrahydrobiopterin = (6R)-L-erythro-6,7-dihydrobiopterin + H2O. The protein is Putative pterin-4-alpha-carbinolamine dehydratase of Mycobacterium avium (strain 104).